The primary structure comprises 236 residues: Sensory rhodopsin I (236 aa).

7 helical membrane-spanning segments follow: residues 6-26 (VVYGITAAGFAVGVAIVGFLY), 37-57 (ILAALALIPGVAGISYVAMVF), 74-94 (YLDWVVTTPLLVGFIGYTAGA), 98-118 (AIFGVMAADALMILAGVGAVV), 126-146 (ALFGVSAVFHISLFAYLYLIF), 167-187 (VGLLWIAYPLVWLAGPEGLGF), and 192-212 (GVSITYAFLDLLAKVPYVYFF). An N6-(retinylidene)lysine modification is found at Lys205.

It belongs to the archaeal/bacterial/fungal opsin family. Interacts with Htr1. The covalent binding of retinal to the apoprotein, bacterioopsin, generates bacteriorhodopsin.

Its subcellular location is the membrane. Its function is as follows. Photoattractant rhodopsin. The protein is Sensory rhodopsin I (sop1) of Haloarcula marismortui (strain ATCC 43049 / DSM 3752 / JCM 8966 / VKM B-1809) (Halobacterium marismortui).